A 269-amino-acid polypeptide reads, in one-letter code: OX-2 membrane glycoprotein (269 aa).

An N-terminal signal peptide occupies residues 1-30 (MERLVIRMPFCHLSTYSLVWVMAAVVLCTA). Positions 31–141 (QVQVVTQDER…SGTACLTVYV (111 aa)) constitute an Ig-like V-type domain. Residues 31 to 236 (QVQVVTQDER…QTVNKGYWFS (206 aa)) lie on the Extracellular side of the membrane. Intrachain disulfides connect C51–C121 and C118–C136. 2 N-linked (GlcNAc...) asparagine glycosylation sites follow: N103 and N110. One can recognise an Ig-like C2-type domain in the interval 142-232 (QPIVSLHYKF…TDFKQTVNKG (91 aa)). N157, N181, and N190 each carry an N-linked (GlcNAc...) asparagine glycan. C160 and C214 are joined by a disulfide. The helical transmembrane segment at 237 to 257 (VPLLLSIVSLVTLLVLISILL) threads the bilayer. At 258 to 269 (YWKRHRNQDREP) the chain is on the cytoplasmic side.

In terms of assembly, CD200 and CD200R1 interact via their respective N-terminal Ig-like domains.

The protein resides in the cell membrane. In terms of biological role, costimulates T-cell proliferation. May regulate myeloid cell activity in a variety of tissues. This Pongo abelii (Sumatran orangutan) protein is OX-2 membrane glycoprotein (CD200).